The following is a 366-amino-acid chain: Probable cinnamyl alcohol dehydrogenase 3 (366 aa).

Residue Cys-53 participates in Zn(2+) binding. Ser-55 provides a ligand contact to NADP(+). Positions 75, 76, 106, 109, 112, 120, and 169 each coordinate Zn(2+). NADP(+) is bound by residues Thr-173, 194–199, 217–222, Thr-257, Gly-281, and 304–306; these read GLGGLG, SSSPGK, and SNI.

The protein belongs to the zinc-containing alcohol dehydrogenase family. Homodimer. Zn(2+) is required as a cofactor.

It catalyses the reaction (E)-cinnamyl alcohol + NADP(+) = (E)-cinnamaldehyde + NADPH + H(+). The enzyme catalyses (E)-coniferol + NADP(+) = (E)-coniferaldehyde + NADPH + H(+). It carries out the reaction (E)-sinapyl alcohol + NADP(+) = (E)-sinapaldehyde + NADPH + H(+). The catalysed reaction is (E)-4-coumaroyl alcohol + NADP(+) = (E)-4-coumaraldehyde + NADPH + H(+). It catalyses the reaction (E)-caffeyl alcohol + NADP(+) = (E)-caffeyl aldehyde + NADPH + H(+). Its pathway is aromatic compound metabolism; phenylpropanoid biosynthesis. Involved in lignin biosynthesis. Catalyzes the final step specific for the production of lignin monomers. Catalyzes the NADPH-dependent reduction of coniferaldehyde, 5-hydroxyconiferaldehyde, sinapaldehyde, 4-coumaraldehyde and caffeyl aldehyde to their respective alcohols. This is Probable cinnamyl alcohol dehydrogenase 3 from Oryza sativa subsp. japonica (Rice).